A 532-amino-acid polypeptide reads, in one-letter code: Probable calcium-binding mitochondrial carrier CBG00135 (532 aa).

4 consecutive EF-hand domains span residues 70-105 (EKEK…QTPH), 107-136 (PATM…NYVI), 137-172 (AHEA…MGVN), and 173-208 (LDDH…YPST). The Ca(2+) site is built by Asp-83, Asp-85, Asp-87, Ser-89, and Asp-94. Ca(2+) contacts are provided by Asp-150, Asn-152, Asp-154, Glu-156, and Glu-161. 3 Solcar repeats span residues 243–329 (GVWW…IKRW), 339–425 (LTTY…LKSC), and 436–526 (PGVL…VRKQ). A run of 6 helical transmembrane segments spans residues 249–266 (LVAG…TAPF), 304–323 (GNGI…FMSY), 349–362 (SSAG…IYPM), 400–419 (GYLP…LTVY), 442–459 (LACG…SYPL), and 501–518 (GITP…ISYV).

It belongs to the mitochondrial carrier (TC 2.A.29) family.

The protein resides in the mitochondrion inner membrane. Functionally, calcium-dependent mitochondrial solute carrier. This is Probable calcium-binding mitochondrial carrier CBG00135 from Caenorhabditis briggsae.